The primary structure comprises 382 residues: DnaJ homolog dnj-20 (382 aa).

An N-terminal signal peptide occupies residues 1–21; the sequence is MRILNVSLLVLTAFLVDFVEC. The region spanning 24 to 89 is the J domain; the sequence is DFYKILGVSK…EKRAMYDRHG (66 aa).

The protein is DnaJ homolog dnj-20 of Caenorhabditis briggsae.